We begin with the raw amino-acid sequence, 168 residues long: uncharacterized protein (168 aa).

Residues 18–73 (RTTVKTKSHNPKTLYPNNKPRWESKLHAGPKGFQSSRTSEKPGRPDPDPEDDPPIP) are disordered. Residues 55 to 64 (TSEKPGRPDP) show a composition bias toward basic and acidic residues. Helical transmembrane passes span 84 to 104 (IVVSVGTPLGLGVAILKVLEV) and 113 to 133 (VPLWVPYLTTLVTFGSSALGI).

The protein resides in the membrane. This is an uncharacterized protein from Arabidopsis thaliana (Mouse-ear cress).